Reading from the N-terminus, the 202-residue chain is Protein lin-28 homolog A (202 aa).

Positions 1-31 are disordered; that stretch reads MGSVSNQQFAGAKPGEEPSGDSPKAENESQP. Residues 33–106 enclose the CSD domain; that stretch reads HGSGICKWFN…GLESIRVTGP (74 aa). The flexible linker stretch occupies residues 107-130; sequence GGVFCIGSERRPKSKSLQKRRSKG. 2 consecutive CCHC-type zinc fingers follow at residues 131–148 and 153–170; these read DRCY…ECKL and KKCH…NCPA. Residues cysteine 133, cysteine 136, histidine 141, cysteine 146, cysteine 155, cysteine 158, histidine 163, and cysteine 168 each coordinate Zn(2+). Positions 169–202 are disordered; it reads PAKAQQSPSSQGKPAYFREKEDMHSSALLPETRE.

This sequence belongs to the lin-28 family. As to quaternary structure, monomer.

The protein localises to the cytoplasm. It localises to the rough endoplasmic reticulum. It is found in the P-body. The protein resides in the stress granule. Its subcellular location is the nucleus. The protein localises to the nucleolus. RNA-binding protein that inhibits processing of pre-let-7 miRNAs and regulates translation of mRNAs that control developmental timing, pluripotency and metabolism. Seems to recognize a common structural G-quartet (G4) feature in its miRNA and mRNA targets. 'Translational enhancer' that drives specific mRNAs to polysomes and increases the efficiency of protein synthesis. Its association with the translational machinery and target mRNAs results in an increased number of initiation events per molecule of mRNA and, indirectly, in mRNA stabilization. Suppressor of microRNA (miRNA) biogenesis, including that of let-7. Binds specific target miRNA precursors (pre-miRNAs), recognizing an 5'-GGAG-3' motif found in their terminal loop, and recruits uridylyltransferase. This results in the terminal uridylation of target pre-miRNAs. Uridylated pre-miRNAs fail to be processed by Dicer and undergo degradation. Localized to the periendoplasmic reticulum area, binds to a large number of spliced mRNAs and inhibits the translation of mRNAs destined for the ER, reducing the synthesis of transmembrane proteins, ER or Golgi lumen proteins, and secretory proteins. Binds to and enhances the translation of mRNAs for several metabolic enzymes, increasing glycolysis and oxidative phosphorylation. Which, with the let-7 repression may enhance tissue repair in adult tissue. In Gallus gallus (Chicken), this protein is Protein lin-28 homolog A (LIN28A).